We begin with the raw amino-acid sequence, 98 residues long: Large ribosomal subunit protein uL23 (98 aa).

The protein belongs to the universal ribosomal protein uL23 family. Part of the 50S ribosomal subunit. Contacts protein L29, and trigger factor when it is bound to the ribosome.

One of the early assembly proteins it binds 23S rRNA. One of the proteins that surrounds the polypeptide exit tunnel on the outside of the ribosome. Forms the main docking site for trigger factor binding to the ribosome. This is Large ribosomal subunit protein uL23 from Clostridium botulinum (strain Eklund 17B / Type B).